Reading from the N-terminus, the 443-residue chain is ATP-dependent protease ATPase subunit HslU (443 aa).

ATP contacts are provided by residues I18 and G60 to E65. The tract at residues D141–E165 is disordered. ATP is bound by residues D256, E321, and R393.

This sequence belongs to the ClpX chaperone family. HslU subfamily. In terms of assembly, a double ring-shaped homohexamer of HslV is capped on each side by a ring-shaped HslU homohexamer. The assembly of the HslU/HslV complex is dependent on binding of ATP.

It is found in the cytoplasm. Functionally, ATPase subunit of a proteasome-like degradation complex; this subunit has chaperone activity. The binding of ATP and its subsequent hydrolysis by HslU are essential for unfolding of protein substrates subsequently hydrolyzed by HslV. HslU recognizes the N-terminal part of its protein substrates and unfolds these before they are guided to HslV for hydrolysis. The chain is ATP-dependent protease ATPase subunit HslU from Photobacterium profundum (strain SS9).